Here is a 286-residue protein sequence, read N- to C-terminus: Eukaryotic translation initiation factor 3 subunit J (286 aa).

Disordered regions lie at residues 1 to 35 (MSWDDEDFDIPSNSKQAAASWEEEGNDEPLLDSWD), 141 to 162 (AASGPTPARLTKDTPIDTHPLF), and 229 to 258 (KAERQARLKKAGGTATGGAGKKKAKPAVKT). Residues 21–35 (WEEEGNDEPLLDSWD) are compositionally biased toward acidic residues. Residues 35 to 75 (DIDEEEVARKKKEEEAKKKAEKEALKKKQEESKAKKLSKNK) adopt a coiled-coil conformation.

It belongs to the eIF-3 subunit J family. As to quaternary structure, component of the eukaryotic translation initiation factor 3 (eIF-3) complex.

The protein resides in the cytoplasm. Functionally, component of the eukaryotic translation initiation factor 3 (eIF-3) complex, which is involved in protein synthesis of a specialized repertoire of mRNAs and, together with other initiation factors, stimulates binding of mRNA and methionyl-tRNAi to the 40S ribosome. The eIF-3 complex specifically targets and initiates translation of a subset of mRNAs involved in cell proliferation. The polypeptide is Eukaryotic translation initiation factor 3 subunit J (Debaryomyces hansenii (strain ATCC 36239 / CBS 767 / BCRC 21394 / JCM 1990 / NBRC 0083 / IGC 2968) (Yeast)).